The following is a 740-amino-acid chain: Eukaryotic translation initiation factor 3 subunit B (740 aa).

Polar residues predominate over residues methionine 1–glutamate 10. A disordered region spans residues methionine 1–glutamate 20. The region spanning threonine 40–aspartate 126 is the RRM domain. WD repeat units lie at residues alanine 193–glutamine 230, proline 232–valine 289, glutamate 302–lysine 343, serine 455–alanine 496, isoleucine 513–glutamate 556, and isoleucine 571–alanine 609. Positions aspartate 695–glutamate 721 are disordered.

This sequence belongs to the eIF-3 subunit B family. As to quaternary structure, component of the eukaryotic translation initiation factor 3 (eIF-3) complex.

The protein resides in the cytoplasm. RNA-binding component of the eukaryotic translation initiation factor 3 (eIF-3) complex, which is involved in protein synthesis of a specialized repertoire of mRNAs and, together with other initiation factors, stimulates binding of mRNA and methionyl-tRNAi to the 40S ribosome. The eIF-3 complex specifically targets and initiates translation of a subset of mRNAs involved in cell proliferation. This Neosartorya fischeri (strain ATCC 1020 / DSM 3700 / CBS 544.65 / FGSC A1164 / JCM 1740 / NRRL 181 / WB 181) (Aspergillus fischerianus) protein is Eukaryotic translation initiation factor 3 subunit B (prt1).